A 534-amino-acid chain; its full sequence is ATP synthase subunit beta 2 (534 aa).

An ATP-binding site is contributed by 185 to 192 (GGAGVGKT). Basic and acidic residues predominate over residues 494–505 (AAAREADARREA). A disordered region spans residues 494–534 (AAAREADARREAAAAASGAGPGTTSDPASGSAEPQGARHGR).

It belongs to the ATPase alpha/beta chains family. In terms of assembly, F-type ATPases have 2 components, CF(1) - the catalytic core - and CF(0) - the membrane proton channel. CF(1) has five subunits: alpha(3), beta(3), gamma(1), delta(1), epsilon(1). CF(0) has three main subunits: a(1), b(2) and c(9-12). The alpha and beta chains form an alternating ring which encloses part of the gamma chain. CF(1) is attached to CF(0) by a central stalk formed by the gamma and epsilon chains, while a peripheral stalk is formed by the delta and b chains.

It localises to the cell inner membrane. It carries out the reaction ATP + H2O + 4 H(+)(in) = ADP + phosphate + 5 H(+)(out). In terms of biological role, produces ATP from ADP in the presence of a proton gradient across the membrane. The catalytic sites are hosted primarily by the beta subunits. This chain is ATP synthase subunit beta 2, found in Burkholderia mallei (strain NCTC 10247).